The chain runs to 95 residues: Co-chaperonin GroES (95 aa).

The protein belongs to the GroES chaperonin family. Heptamer of 7 subunits arranged in a ring. Interacts with the chaperonin GroEL.

Its subcellular location is the cytoplasm. Functionally, together with the chaperonin GroEL, plays an essential role in assisting protein folding. The GroEL-GroES system forms a nano-cage that allows encapsulation of the non-native substrate proteins and provides a physical environment optimized to promote and accelerate protein folding. GroES binds to the apical surface of the GroEL ring, thereby capping the opening of the GroEL channel. The chain is Co-chaperonin GroES from Xylella fastidiosa (strain M12).